The primary structure comprises 417 residues: Serine hydroxymethyltransferase (417 aa).

(6S)-5,6,7,8-tetrahydrofolate is bound by residues L121 and 125–127 (GHL). Position 230 is an N6-(pyridoxal phosphate)lysine (K230). 355–357 (SPF) contacts (6S)-5,6,7,8-tetrahydrofolate.

This sequence belongs to the SHMT family. In terms of assembly, homodimer. Pyridoxal 5'-phosphate serves as cofactor.

The protein resides in the cytoplasm. It carries out the reaction (6R)-5,10-methylene-5,6,7,8-tetrahydrofolate + glycine + H2O = (6S)-5,6,7,8-tetrahydrofolate + L-serine. It functions in the pathway one-carbon metabolism; tetrahydrofolate interconversion. It participates in amino-acid biosynthesis; glycine biosynthesis; glycine from L-serine: step 1/1. Catalyzes the reversible interconversion of serine and glycine with tetrahydrofolate (THF) serving as the one-carbon carrier. This reaction serves as the major source of one-carbon groups required for the biosynthesis of purines, thymidylate, methionine, and other important biomolecules. Also exhibits THF-independent aldolase activity toward beta-hydroxyamino acids, producing glycine and aldehydes, via a retro-aldol mechanism. The protein is Serine hydroxymethyltransferase of Ruthia magnifica subsp. Calyptogena magnifica.